A 221-amino-acid polypeptide reads, in one-letter code: GDP-perosamine N-acetyltransferase (221 aa).

Catalysis depends on histidine 139, which acts as the Proton acceptor.

It belongs to the transferase hexapeptide repeat family. As to quaternary structure, homotrimer.

The catalysed reaction is GDP-alpha-D-perosamine + acetyl-CoA = GDP-N-acetyl-alpha-D-perosamine + CoA + H(+). The protein operates within bacterial outer membrane biogenesis; LPS O-antigen biosynthesis. In terms of biological role, catalyzes the transfer of an acetyl residue from acetyl-CoA onto GDP-perosamine to form GDP-N-acetyl-perosamine. In Escherichia coli O157:H7, this protein is GDP-perosamine N-acetyltransferase.